We begin with the raw amino-acid sequence, 280 residues long: uncharacterized protein (280 aa).

6 helical membrane passes run 46-66 (LIFLLALPFLTLPFDSYFVCT), 81-101 (IACSYFVFPLISYQIWCFLIP), 114-134 (FFYLSGSCFFLFLFLTFSWVV), 137-157 (VWHFLYFVGATSTNSLMIKLQ), 170-190 (ILFISSVCSQVPVIVICLLEL), and 225-245 (IVACFLISLIIELAIFVALIV). The segment at 258 to 280 (ESGSIEKKNKSSPPPRTWQSNYQ) is disordered.

The protein belongs to the TatC family.

It localises to the mitochondrion membrane. This is an uncharacterized protein from Arabidopsis thaliana (Mouse-ear cress).